A 72-amino-acid polypeptide reads, in one-letter code: Translation initiation factor IF-1 (72 aa).

An S1-like domain is found at 1-72 (MAKEDVIEMQ…SKGRIVFRAR (72 aa)).

Belongs to the IF-1 family. As to quaternary structure, component of the 30S ribosomal translation pre-initiation complex which assembles on the 30S ribosome in the order IF-2 and IF-3, IF-1 and N-formylmethionyl-tRNA(fMet); mRNA recruitment can occur at any time during PIC assembly.

The protein resides in the cytoplasm. Its function is as follows. One of the essential components for the initiation of protein synthesis. Stabilizes the binding of IF-2 and IF-3 on the 30S subunit to which N-formylmethionyl-tRNA(fMet) subsequently binds. Helps modulate mRNA selection, yielding the 30S pre-initiation complex (PIC). Upon addition of the 50S ribosomal subunit IF-1, IF-2 and IF-3 are released leaving the mature 70S translation initiation complex. This chain is Translation initiation factor IF-1, found in Photobacterium profundum (strain SS9).